A 620-amino-acid polypeptide reads, in one-letter code: 1-deoxy-D-xylulose-5-phosphate synthase (620 aa).

Thiamine diphosphate contacts are provided by residues histidine 80 and 121 to 123; that span reads GHS. Aspartate 152 provides a ligand contact to Mg(2+). Thiamine diphosphate-binding positions include 153–154, asparagine 181, tyrosine 288, and glutamate 370; that span reads GA. Asparagine 181 is a Mg(2+) binding site.

This sequence belongs to the transketolase family. DXPS subfamily. In terms of assembly, homodimer. The cofactor is Mg(2+). Requires thiamine diphosphate as cofactor.

The catalysed reaction is D-glyceraldehyde 3-phosphate + pyruvate + H(+) = 1-deoxy-D-xylulose 5-phosphate + CO2. It participates in metabolic intermediate biosynthesis; 1-deoxy-D-xylulose 5-phosphate biosynthesis; 1-deoxy-D-xylulose 5-phosphate from D-glyceraldehyde 3-phosphate and pyruvate: step 1/1. In terms of biological role, catalyzes the acyloin condensation reaction between C atoms 2 and 3 of pyruvate and glyceraldehyde 3-phosphate to yield 1-deoxy-D-xylulose-5-phosphate (DXP). In Salmonella arizonae (strain ATCC BAA-731 / CDC346-86 / RSK2980), this protein is 1-deoxy-D-xylulose-5-phosphate synthase.